A 170-amino-acid polypeptide reads, in one-letter code: Ureidoglycolate lyase (170 aa).

This sequence belongs to the ureidoglycolate lyase family. In terms of assembly, homodimer. Ni(2+) is required as a cofactor.

The catalysed reaction is (S)-ureidoglycolate = urea + glyoxylate. It functions in the pathway nitrogen metabolism; (S)-allantoin degradation. Functionally, catalyzes the catabolism of the allantoin degradation intermediate (S)-ureidoglycolate, generating urea and glyoxylate. Involved in the utilization of allantoin as nitrogen source. The chain is Ureidoglycolate lyase from Pseudomonas syringae pv. syringae (strain B728a).